Here is a 342-residue protein sequence, read N- to C-terminus: S-adenosylmethionine:tRNA ribosyltransferase-isomerase (342 aa).

The protein belongs to the QueA family. In terms of assembly, monomer.

The protein localises to the cytoplasm. The catalysed reaction is 7-aminomethyl-7-carbaguanosine(34) in tRNA + S-adenosyl-L-methionine = epoxyqueuosine(34) in tRNA + adenine + L-methionine + 2 H(+). The protein operates within tRNA modification; tRNA-queuosine biosynthesis. Its function is as follows. Transfers and isomerizes the ribose moiety from AdoMet to the 7-aminomethyl group of 7-deazaguanine (preQ1-tRNA) to give epoxyqueuosine (oQ-tRNA). This chain is S-adenosylmethionine:tRNA ribosyltransferase-isomerase, found in Streptococcus pyogenes serotype M1.